We begin with the raw amino-acid sequence, 153 residues long: Large ribosomal subunit protein uL15 (153 aa).

The protein belongs to the universal ribosomal protein uL15 family. As to quaternary structure, part of the 50S ribosomal subunit.

Functionally, binds to the 23S rRNA. The chain is Large ribosomal subunit protein uL15 from Pelagibacter ubique (strain HTCC1062).